The sequence spans 170 residues: Siroheme decarboxylase NirL subunit (170 aa).

It belongs to the Ahb/Nir family. In terms of assembly, probably forms a complex composed of NirD, NirL, NirG and NirH. All proteins are required for the total conversion of siroheme to didecarboxysiroheme.

It carries out the reaction siroheme + 2 H(+) = 12,18-didecarboxysiroheme + 2 CO2. It participates in porphyrin-containing compound metabolism. Involved in heme d1 biosynthesis. Catalyzes the decarboxylation of siroheme into didecarboxysiroheme. This chain is Siroheme decarboxylase NirL subunit, found in Stutzerimonas stutzeri (Pseudomonas stutzeri).